We begin with the raw amino-acid sequence, 283 residues long: Protein MGARP (283 aa).

A disordered region spans residues 1 to 36; it reads MYLRRAVSKTLALPRRAPPGPAPLGKDASLRRMSSR. Over 1–41 the chain is Cytoplasmic; it reads MYLRRAVSKTLALPRRAPPGPAPLGKDASLRRMSSRKFPGT. A helical; Anchor for type IV membrane protein membrane pass occupies residues 42-64; it reads SGSNMIYYLVVGVTVSAGGYYTY. The Mitochondrial intermembrane portion of the chain corresponds to 65-283; the sequence is KALTSKQVRR…VTEETASPQG (219 aa). Disordered stretches follow at residues 78 to 101 and 118 to 283; these read VAEP…EHVA and AESV…SPQG. Low complexity predominate over residues 128-160; it reads EAAVVLPEESQASAPSEVPAEAAVVEASLSSSE. Polar residues-rich tracts occupy residues 171–184 and 199–220; these read VETT…TQEV and ADTS…QEGA. A compositionally biased stretch (basic and acidic residues) spans 221–245; it reads DTTKEEADNSKEAEGTTTEDPRSIS.

As to quaternary structure, interacts with RHOT1/Miro-1, RHOT2/Miro-2, TRAK1/OIP106 and TRAK2/GRIF1. In terms of tissue distribution, expressed in the ovary, testis, brain, adrenal glands and the compartments of the visual nervous system. Expressed in corneal endothelium (CE) (at protein level). Expressed in steroidogenic tissues with the highest level of expression observed in the adrenal gland. Weakly expressed in placenta. Weakly expressed in astrocytes and neurons under normoxia. Strongly expressed in astrocytes and neurons under hypoxia. Expressed in each layer of the retina, with particularly higher staining in the inner segment of the photoreceptor (IS), the outer plexiform layer (OPL) and the ganglion cell layer (GCL).

Its subcellular location is the mitochondrion. The protein localises to the mitochondrion outer membrane. It is found in the mitochondrion inner membrane. Plays a role in the trafficking of mitochondria along microtubules. Regulates the kinesin-mediated axonal transport of mitochondria to nerve terminals along microtubules during hypoxia. Participates in the translocation of TRAK2/GRIF1 from the cytoplasm to the mitochondrion. Also plays a role in steroidogenesis through maintenance of mitochondrial abundance and morphology. Plays an inhibitory role during neocortex development by regulating mitochondrial morphology, distribution and motility in neocortical neurons. This Mus musculus (Mouse) protein is Protein MGARP (Mgarp).